The sequence spans 76 residues: Parvalbumin beta 3 (76 aa).

Ala-1 carries the post-translational modification N-acetylalanine. One can recognise an EF-hand domain in the interval 31–66; it reads KSPEEVKKFFAIIDQDHSGFIEEEELKLFLQTFSAG. Ca(2+)-binding residues include Asp-44, Asp-46, Ser-48, Phe-50, Glu-52, and Glu-55.

This sequence belongs to the parvalbumin family.

In muscle, parvalbumin is thought to be involved in relaxation after contraction. It binds two calcium ions. This chain is Parvalbumin beta 3, found in Merluccius polylepis (Southern hake).